The following is a 490-amino-acid chain: Ribulose bisphosphate carboxylase large chain (490 aa).

Substrate is bound by residues Asn127 and Thr177. The active-site Proton acceptor is the Lys179. Lys181 provides a ligand contact to substrate. Mg(2+)-binding residues include Lys205, Asp207, and Glu208. Lys205 is modified (N6-carboxylysine). The active-site Proton acceptor is the His297. Substrate is bound by residues Arg298, His330, and Ser382.

The protein belongs to the RuBisCO large chain family. Type I subfamily. Heterohexadecamer of 8 large chains and 8 small chains. Mg(2+) is required as a cofactor.

The protein resides in the plastid. Its subcellular location is the chloroplast. The enzyme catalyses 2 (2R)-3-phosphoglycerate + 2 H(+) = D-ribulose 1,5-bisphosphate + CO2 + H2O. It carries out the reaction D-ribulose 1,5-bisphosphate + O2 = 2-phosphoglycolate + (2R)-3-phosphoglycerate + 2 H(+). RuBisCO catalyzes two reactions: the carboxylation of D-ribulose 1,5-bisphosphate, the primary event in carbon dioxide fixation, as well as the oxidative fragmentation of the pentose substrate in the photorespiration process. Both reactions occur simultaneously and in competition at the same active site. This Trieres chinensis (Marine centric diatom) protein is Ribulose bisphosphate carboxylase large chain.